Here is a 670-residue protein sequence, read N- to C-terminus: Amyloid beta A4 precursor protein-binding family B member 1-interacting protein (670 aa).

The residue at position 55 (Ser-55) is a Phosphoserine. Residues 179 to 266 (KKLVVKVHMD…KVLFLEKEER (88 aa)) enclose the Ras-associating domain. Positions 313–422 (VPELEGALYL…WVMGIRIAKY (110 aa)) constitute a PH domain. Positions 449–653 (VGTPMPAQPS…PGAPGNSEQD (205 aa)) are disordered. The span at 456-475 (QPSTVSSGLKTGTSQPNGQM) shows a compositional bias: polar residues. Ser-532 carries the post-translational modification Phosphoserine. Phosphothreonine is present on Thr-534. Ser-537 bears the Phosphoserine mark. Composition is skewed to pro residues over residues 553 to 567 (PHPPENFLPPPPPPP), 576 to 599 (LPPPPPPPYLEEPPDFVPPPPPPA), 606 to 615 (LPPPPPPPPC), and 625 to 634 (PLPPKKPLVP).

This sequence belongs to the MRL family. Interacts, through the N-terminal Pro-rich region, with the WW domain of APBB1. Interacts with RAP1A, PFN1, VASP and ENAH. In terms of tissue distribution, ubiquitously expressed with high expression in the hematopoietic system.

It localises to the cell membrane. It is found in the cell projection. The protein resides in the lamellipodium. Its subcellular location is the cell junction. The protein localises to the focal adhesion. It localises to the cytoplasm. It is found in the cytoskeleton. In terms of biological role, appears to function in the signal transduction from Ras activation to actin cytoskeletal remodeling. Suppresses insulin-induced promoter activities through AP1 and SRE. Mediates Rap1-induced adhesion. This is Amyloid beta A4 precursor protein-binding family B member 1-interacting protein (Apbb1ip) from Mus musculus (Mouse).